The sequence spans 316 residues: Phosphoribosylaminoimidazole-succinocarboxamide synthase (316 aa).

It belongs to the SAICAR synthetase family.

The enzyme catalyses 5-amino-1-(5-phospho-D-ribosyl)imidazole-4-carboxylate + L-aspartate + ATP = (2S)-2-[5-amino-1-(5-phospho-beta-D-ribosyl)imidazole-4-carboxamido]succinate + ADP + phosphate + 2 H(+). The protein operates within purine metabolism; IMP biosynthesis via de novo pathway; 5-amino-1-(5-phospho-D-ribosyl)imidazole-4-carboxamide from 5-amino-1-(5-phospho-D-ribosyl)imidazole-4-carboxylate: step 1/2. In Flavobacterium psychrophilum (strain ATCC 49511 / DSM 21280 / CIP 103535 / JIP02/86), this protein is Phosphoribosylaminoimidazole-succinocarboxamide synthase.